An 88-amino-acid polypeptide reads, in one-letter code: Small ribosomal subunit protein bS20 (88 aa).

It belongs to the bacterial ribosomal protein bS20 family.

In terms of biological role, binds directly to 16S ribosomal RNA. The protein is Small ribosomal subunit protein bS20 of Renibacterium salmoninarum (strain ATCC 33209 / DSM 20767 / JCM 11484 / NBRC 15589 / NCIMB 2235).